Reading from the N-terminus, the 71-residue chain is Delta-actitoxin-Avd2b 4 (71 aa).

An N-terminal signal peptide occupies residues 1 to 20; sequence MMNRLLVFLMLGAFMLVVSA. Positions 21–41 are excised as a propeptide; the sequence is NDAYGDEPAFKDLNQGDESLG. 3 cysteine pairs are disulfide-bonded: cysteine 46/cysteine 61, cysteine 47/cysteine 55, and cysteine 49/cysteine 66.

This sequence belongs to the sea anemone short toxin (type III) family.

The protein resides in the secreted. It is found in the nematocyst. In terms of biological role, voltage-gated sodium channel (Nav) inhibitor. 1 uM completely inhibits insect voltage-gated sodium channel inactivation (DmNav1 from D.melanogaster). This is Delta-actitoxin-Avd2b 4 from Anemonia viridis (Snakelocks anemone).